A 585-amino-acid polypeptide reads, in one-letter code: Arginine--tRNA ligase (585 aa).

The short motif at Ala131 to His141 is the 'HIGH' region element.

Belongs to the class-I aminoacyl-tRNA synthetase family. In terms of assembly, monomer.

It localises to the cytoplasm. The enzyme catalyses tRNA(Arg) + L-arginine + ATP = L-arginyl-tRNA(Arg) + AMP + diphosphate. This chain is Arginine--tRNA ligase, found in Bartonella tribocorum (strain CIP 105476 / IBS 506).